The sequence spans 283 residues: UPF0273 protein STK_18300 (283 aa).

Residues 4–249 (LRVRTYIPGF…YLRITNVKAE (246 aa)) enclose the KaiC domain. ATP is bound at residue 31–38 (GGPGTGKS). The interval 261-283 (MKKAVEESEEEKESIQEAEIEEE) is disordered. The segment covering 267-283 (ESEEEKESIQEAEIEEE) has biased composition (acidic residues).

Belongs to the UPF0273 family.

This chain is UPF0273 protein STK_18300, found in Sulfurisphaera tokodaii (strain DSM 16993 / JCM 10545 / NBRC 100140 / 7) (Sulfolobus tokodaii).